The sequence spans 345 residues: Tropomodulin-4 (345 aa).

The interval 42-63 (NMLLPAGLRQRDQTKKSPTGPL) is disordered.

Belongs to the tropomodulin family. As to quaternary structure, binds to the N-terminus of tropomyosin and to actin.

It localises to the cytoplasm. The protein localises to the cytoskeleton. Blocks the elongation and depolymerization of the actin filaments at the pointed end. The Tmod/TM complex contributes to the formation of the short actin protofilament, which in turn defines the geometry of the membrane skeleton. The polypeptide is Tropomodulin-4 (TMOD4) (Bos taurus (Bovine)).